A 267-amino-acid polypeptide reads, in one-letter code: L-aspartate dehydrogenase (267 aa).

The NAD(+) site is built by A124 and N190. Residue H220 is part of the active site.

This sequence belongs to the L-aspartate dehydrogenase family.

The enzyme catalyses L-aspartate + NADP(+) + H2O = oxaloacetate + NH4(+) + NADPH + H(+). It carries out the reaction L-aspartate + NAD(+) + H2O = oxaloacetate + NH4(+) + NADH + H(+). It participates in cofactor biosynthesis; NAD(+) biosynthesis; iminoaspartate from L-aspartate (dehydrogenase route): step 1/1. In terms of biological role, specifically catalyzes the NAD or NADP-dependent dehydrogenation of L-aspartate to iminoaspartate. The chain is L-aspartate dehydrogenase from Pseudomonas aeruginosa (strain ATCC 15692 / DSM 22644 / CIP 104116 / JCM 14847 / LMG 12228 / 1C / PRS 101 / PAO1).